Reading from the N-terminus, the 1859-residue chain is Retinitis pigmentosa 1-like 1 protein (1859 aa).

Disordered stretches follow at residues Met-1–Arg-22 and Arg-115–Lys-154. A Doublecortin 1 domain is found at Lys-42–Arg-126. Positions Arg-115–Arg-126 are enriched in basic and acidic residues. Positions Lys-130–Val-139 are enriched in polar residues. Residues Arg-160 to Glu-239 form the Doublecortin 2 domain. Disordered regions lie at residues Pro-263–Arg-301, Ile-426–Trp-445, Trp-457–His-593, Met-700–Ala-750, Cys-868–Ala-920, Asn-952–Ser-997, Thr-1152–Leu-1211, Ala-1227–Leu-1255, Gly-1298–Glu-1350, and Leu-1567–Phe-1859. Over residues Trp-457–Leu-472 the composition is skewed to basic and acidic residues. Polar residues-rich tracts occupy residues Gly-499–His-512 and Pro-535–Ala-551. A compositionally biased stretch (low complexity) spans Ser-716–Ser-728. Residues Pro-734–Ala-750 are compositionally biased toward polar residues. Residues Gly-870 to His-883 show a composition bias toward low complexity. 3 stretches are compositionally biased toward polar residues: residues Thr-1241–Ser-1252, Glu-1336–Asn-1345, and Leu-1567–Arg-1577. Over residues Gly-1616–Lys-1632 the composition is skewed to basic and acidic residues. Over residues Pro-1641–Glu-1652 the composition is skewed to acidic residues. Positions Glu-1700–Ser-1720 are enriched in basic and acidic residues. The segment covering Ser-1756–Gly-1778 has biased composition (polar residues).

As to quaternary structure, interacts with RP1; has a synergistic effect with RP1 in photoreceptor differentiation. In terms of tissue distribution, retinal-specific; expressed in photoreceptor.

It is found in the cytoplasm. It localises to the cytoskeleton. Its subcellular location is the cilium axoneme. The protein localises to the cell projection. The protein resides in the cilium. It is found in the photoreceptor outer segment. In terms of biological role, required for the differentiation of photoreceptor cells. Plays a role in the organization of outer segment of rod and cone photoreceptors. The sequence is that of Retinitis pigmentosa 1-like 1 protein (Rp1l1) from Mus musculus (Mouse).